We begin with the raw amino-acid sequence, 310 residues long: Epoxyqueuosine reductase (310 aa).

Asp133 acts as the Proton donor in catalysis. The region spanning 179-208 (YDNPSDKDYCGTCTRCVDACPTDAILQDNL) is the 4Fe-4S ferredoxin-type domain. 8 residues coordinate [4Fe-4S] cluster: Cys188, Cys191, Cys194, Cys198, Cys214, Cys241, Cys244, and Cys248.

This sequence belongs to the QueG family. Monomer. Requires cob(II)alamin as cofactor. [4Fe-4S] cluster is required as a cofactor.

The protein resides in the cytoplasm. It carries out the reaction epoxyqueuosine(34) in tRNA + AH2 = queuosine(34) in tRNA + A + H2O. It functions in the pathway tRNA modification; tRNA-queuosine biosynthesis. In terms of biological role, catalyzes the conversion of epoxyqueuosine (oQ) to queuosine (Q), which is a hypermodified base found in the wobble positions of tRNA(Asp), tRNA(Asn), tRNA(His) and tRNA(Tyr). The polypeptide is Epoxyqueuosine reductase (Cyclobacterium marinum (strain ATCC 25205 / DSM 745 / LMG 13164 / NCIMB 1802) (Flectobacillus marinus)).